Here is a 432-residue protein sequence, read N- to C-terminus: 3-phosphoshikimate 1-carboxyvinyltransferase (432 aa).

The 3-phosphoshikimate site is built by Lys23, Ser24, and Arg28. Phosphoenolpyruvate is bound at residue Lys23. The phosphoenolpyruvate site is built by Gly95 and Arg123. 3-phosphoshikimate-binding residues include Ser167, Gln169, Asp317, and Lys344. Gln169 lines the phosphoenolpyruvate pocket. Asp317 serves as the catalytic Proton acceptor. Phosphoenolpyruvate-binding residues include Arg348 and Arg390.

The protein belongs to the EPSP synthase family. In terms of assembly, monomer.

It is found in the cytoplasm. It catalyses the reaction 3-phosphoshikimate + phosphoenolpyruvate = 5-O-(1-carboxyvinyl)-3-phosphoshikimate + phosphate. The protein operates within metabolic intermediate biosynthesis; chorismate biosynthesis; chorismate from D-erythrose 4-phosphate and phosphoenolpyruvate: step 6/7. Catalyzes the transfer of the enolpyruvyl moiety of phosphoenolpyruvate (PEP) to the 5-hydroxyl of shikimate-3-phosphate (S3P) to produce enolpyruvyl shikimate-3-phosphate and inorganic phosphate. The chain is 3-phosphoshikimate 1-carboxyvinyltransferase from Staphylococcus carnosus (strain TM300).